Consider the following 331-residue polypeptide: Vitamin B12 import system permease protein BtuC (331 aa).

9 consecutive transmembrane segments (helical) span residues 20-42 (VMLA…FLSP), 62-84 (LVAA…VLLG), 91-113 (GVLG…LPVM), 117-136 (TVFM…ILVG), 148-170 (MLLV…FYFS), 190-209 (SWHH…WLCL), 240-262 (LAIS…VGLV), 277-296 (FLLP…SDIW), and 303-325 (SAEL…WMLI).

This sequence belongs to the binding-protein-dependent transport system permease family. FecCD subfamily. The complex is composed of two ATP-binding proteins (BtuD), two transmembrane proteins (BtuC) and a solute-binding protein (BtuF).

It localises to the cell inner membrane. Functionally, part of the ABC transporter complex BtuCDF involved in vitamin B12 import. Involved in the translocation of the substrate across the membrane. This is Vitamin B12 import system permease protein BtuC from Vibrio vulnificus (strain CMCP6).